The following is a 265-amino-acid chain: Small ribosomal subunit protein uS3 (265 aa).

Residues 43–111 enclose the KH type-2 domain; it reads IRTMLKTSLD…QIQLNILEVK (69 aa). The interval 217-265 is disordered; that stretch reads AREQANQKSSRPERRNDRSDGRTGDRRTNAPRTAPAAEAAPVAAAGVEA. Basic and acidic residues predominate over residues 226–244; sequence SRPERRNDRSDGRTGDRRT. Over residues 250 to 265 the composition is skewed to low complexity; that stretch reads APAAEAAPVAAAGVEA.

It belongs to the universal ribosomal protein uS3 family. In terms of assembly, part of the 30S ribosomal subunit. Forms a tight complex with proteins S10 and S14.

Its function is as follows. Binds the lower part of the 30S subunit head. Binds mRNA in the 70S ribosome, positioning it for translation. The sequence is that of Small ribosomal subunit protein uS3 from Clavibacter michiganensis subsp. michiganensis (strain NCPPB 382).